The primary structure comprises 181 residues: Ribonuclease HII (181 aa).

The 181-residue stretch at 1-181 (MICGIDEVGR…SLHRKNFKLI (181 aa)) folds into the RNase H type-2 domain. A divalent metal cation contacts are provided by aspartate 6, glutamate 7, and aspartate 98.

It belongs to the RNase HII family. Requires Mn(2+) as cofactor. It depends on Mg(2+) as a cofactor.

The protein resides in the cytoplasm. It catalyses the reaction Endonucleolytic cleavage to 5'-phosphomonoester.. Endonuclease that specifically degrades the RNA of RNA-DNA hybrids. The sequence is that of Ribonuclease HII (rnhB) from Borreliella burgdorferi (strain ATCC 35210 / DSM 4680 / CIP 102532 / B31) (Borrelia burgdorferi).